A 297-amino-acid polypeptide reads, in one-letter code: Homoserine kinase (297 aa).

Residue 82–92 (PVSRGLGSSAA) coordinates ATP.

Belongs to the GHMP kinase family. Homoserine kinase subfamily.

The protein resides in the cytoplasm. The enzyme catalyses L-homoserine + ATP = O-phospho-L-homoserine + ADP + H(+). It participates in amino-acid biosynthesis; L-threonine biosynthesis; L-threonine from L-aspartate: step 4/5. Catalyzes the ATP-dependent phosphorylation of L-homoserine to L-homoserine phosphate. In Clostridium botulinum (strain Loch Maree / Type A3), this protein is Homoserine kinase.